The sequence spans 380 residues: Alcohol dehydrogenase 1 (380 aa).

Positions 48, 50, 70, 100, 103, 106, 114, and 178 each coordinate Zn(2+). An alcohol is bound by residues T50 and H70. Residue T50 participates in NAD(+) binding. NAD(+)-binding positions include 203–208, D227, R232, T273, V296, 296–298, F323, and R373; these read GLGAVG and VGV.

The protein belongs to the zinc-containing alcohol dehydrogenase family. Homodimer. Homotetramer. The cofactor is Zn(2+).

The protein resides in the cytoplasm. It catalyses the reaction a primary alcohol + NAD(+) = an aldehyde + NADH + H(+). It carries out the reaction a secondary alcohol + NAD(+) = a ketone + NADH + H(+). This is Alcohol dehydrogenase 1 (ADH1) from Solanum tuberosum (Potato).